The primary structure comprises 311 residues: MLQAENIKKAYGKKTIVKGISFSLKKGESFGLLGPNGAGKSTTISMISGLVPHDSGNITVGGYVIGKETAKAKQKIGIVPQEIALYPTLTAHENLMFWGKMYGLTHGEAKKRAAEVLEYVGLTERAKDKIETFSGGMKRRINIGAALMHKPELLIMDEPTVGIDPQSRNHILETVKQLNETGMTVIYTSHYMEEVEFLCDRIGIIDQGEMIAIGTKTDLCSRLGGDTIIQLTVSGINEAFLVAIRSLAHVNDVTVHELELKIDISAAHHEKVVTSLLAEATAHHINLLSLQVQEPNLERLFLNLTGRTLRD.

Residues 2–232 (LQAENIKKAY…LGGDTIIQLT (231 aa)) enclose the ABC transporter domain. ATP is bound at residue 34-41 (GPNGAGKS).

The protein belongs to the ABC transporter superfamily. As to quaternary structure, the complex is composed of two ATP-binding proteins (LnrL) and two transmembrane proteins (LnrM and LnrN).

Its function is as follows. Required for resistance to linearmycins, a family of antibiotic-specialized metabolites produced by some streptomycetes. Part of the ABC transporter complex LnrLMN that probably facilitates linearmycin removal from the membrane. Responsible for energy coupling to the transport system. Also mediates KinC-dependent biofilm morphology. In Bacillus subtilis (strain 168), this protein is Linearmycin resistance ATP-binding protein LnrL.